The sequence spans 522 residues: Lysine--tRNA ligase (522 aa).

The 'HIGH' region signature appears at 44–52 (PSGLPHIGT). The 'KMSKS' region signature appears at 290–294 (KISKS). Residue lysine 293 coordinates ATP.

The protein belongs to the class-I aminoacyl-tRNA synthetase family.

It is found in the cytoplasm. It carries out the reaction tRNA(Lys) + L-lysine + ATP = L-lysyl-tRNA(Lys) + AMP + diphosphate. In Rickettsia africae (strain ESF-5), this protein is Lysine--tRNA ligase.